Reading from the N-terminus, the 147-residue chain is UPF0178 protein Tgr7_2584 (147 aa).

Belongs to the UPF0178 family.

The polypeptide is UPF0178 protein Tgr7_2584 (Thioalkalivibrio sulfidiphilus (strain HL-EbGR7)).